A 52-amino-acid chain; its full sequence is MDKYECSICGYIYDEAEGDDGNVAAGTKFADLPADWVCPTCGADKDAFVKMD.

The Rubredoxin-like domain maps to methionine 1–methionine 51. Positions 6, 9, 38, and 41 each coordinate Fe cation.

It belongs to the rubredoxin family. The cofactor is Fe(3+).

Its function is as follows. Rubredoxin is a small nonheme, iron protein lacking acid-labile sulfide. Its single Fe, chelated to 4 Cys, functions as an electron acceptor and may also stabilize the conformation of the molecule. The chain is Rubredoxin from Megasphaera elsdenii.